A 434-amino-acid polypeptide reads, in one-letter code: MPMQIMLSTQVADEAWGKNALLSFHQAQATIHVTDYSARNTVQKAARKLRGQGIKDVVLAGENWDLETCWAFYQGFYSAKQDYAVEFPTLDDAPQAELLARIQCGDFVREMINLPAEVITPVELARRAAHFIEEQAEEYGDKSAVSFNIISGEELKAQNYQGIWNVGRGSANPPAMLQLDFNPTGNPDAPVLACLVGKGITFDSGGYSIKPSDNMSTMRTDMGGAALLTGSLGLAIARGLTQRVKLYLCCAENLVSSNAFKLGDIITYSNGVTAEILNTDAEGRLVLADGLIEADKQQPKMIIDCATLTGAAKMAVGNDYHSVLSMDDALVAALFKSAETEQEPFWRLPFAELHRSQISTAFADIANTGTVPVGAGASTATAFLSYFVKNYQQHWLHIDCSATYRKTASDLWAVGATGIGVQTLANLLLNPVKG.

Mn(2+) contacts are provided by Lys198 and Asp203. The active site involves Lys210. Mn(2+)-binding residues include Asp221, Asp280, and Glu282. Residue Arg284 is part of the active site.

The protein belongs to the peptidase M17 family. Homohexamer. The cofactor is Mn(2+).

It localises to the cytoplasm. The catalysed reaction is Release of an N-terminal amino acid, Xaa, from a peptide or arylamide. Xaa is preferably Glu or Asp but may be other amino acids, including Leu, Met, His, Cys and Gln.. In terms of biological role, probably plays an important role in intracellular peptide degradation. The polypeptide is Peptidase B (Pasteurella multocida (strain Pm70)).